A 541-amino-acid chain; its full sequence is uncharacterized protein (541 aa).

A run of 5 helical transmembrane segments spans residues Leu10–Ile32, Ser39–Pro57, Thr62–Leu84, Leu91–Phe113, and Ala146–Ile168. RCK C-terminal domains lie at Leu183–Glu260 and Thr268–Asn352. Helical transmembrane passes span Ser357–Leu375, Ser385–Tyr407, Gly428–Thr447, Gly452–Cys474, Pro481–Ala500, and Tyr515–Val537.

Belongs to the AAE transporter (TC 2.A.81) family.

Its subcellular location is the cell membrane. This is an uncharacterized protein from Desulfotalea psychrophila (strain LSv54 / DSM 12343).